Consider the following 282-residue polypeptide: Protoheme IX farnesyltransferase (282 aa).

9 helical membrane-spanning segments follow: residues 9–29 (LAKPGIIFGNLITLTGGFLLA), 39–59 (LPLFVYVMIGVALMIAAGCVF), 79–99 (LVTGDISVIQATIYGTILLIL), 102–122 (LVLYYLVNLLTLWIIIIGFIV), 139–159 (VLGGISGAIPPVAGYTAVVNI), 165–185 (LALFLILFFWQIPHSYAIAML), 210–230 (IMLFYLALFVVSCALPAVLGS), 231–251 (ADLFSFIVCMLVALFWMYKSI), and 261–281 (VFAKTVFKFSIIVITAICLTM).

It belongs to the UbiA prenyltransferase family. Protoheme IX farnesyltransferase subfamily.

Its subcellular location is the cell inner membrane. The enzyme catalyses heme b + (2E,6E)-farnesyl diphosphate + H2O = Fe(II)-heme o + diphosphate. Its pathway is porphyrin-containing compound metabolism; heme O biosynthesis; heme O from protoheme: step 1/1. Converts heme B (protoheme IX) to heme O by substitution of the vinyl group on carbon 2 of heme B porphyrin ring with a hydroxyethyl farnesyl side group. In Francisella tularensis subsp. novicida (strain U112), this protein is Protoheme IX farnesyltransferase.